Reading from the N-terminus, the 347-residue chain is Histidinol-phosphate aminotransferase (347 aa).

K209 bears the N6-(pyridoxal phosphate)lysine mark.

Belongs to the class-II pyridoxal-phosphate-dependent aminotransferase family. Histidinol-phosphate aminotransferase subfamily. In terms of assembly, homodimer. It depends on pyridoxal 5'-phosphate as a cofactor.

The enzyme catalyses L-histidinol phosphate + 2-oxoglutarate = 3-(imidazol-4-yl)-2-oxopropyl phosphate + L-glutamate. The protein operates within amino-acid biosynthesis; L-histidine biosynthesis; L-histidine from 5-phospho-alpha-D-ribose 1-diphosphate: step 7/9. The protein is Histidinol-phosphate aminotransferase of Geotalea daltonii (strain DSM 22248 / JCM 15807 / FRC-32) (Geobacter daltonii).